Reading from the N-terminus, the 400-residue chain is Argininosuccinate synthase (400 aa).

ATP contacts are provided by residues 10-18 (AYSGGVDTS) and Ala38. Tyr89 serves as a coordination point for L-citrulline. Residue Gly119 coordinates ATP. L-aspartate is bound by residues Thr121, Asn125, and Asp126. L-citrulline is bound at residue Asn125. Residues Arg129, Ser177, Ser186, Glu262, and Tyr274 each contribute to the L-citrulline site.

This sequence belongs to the argininosuccinate synthase family. Type 1 subfamily. In terms of assembly, homotetramer.

The protein localises to the cytoplasm. It carries out the reaction L-citrulline + L-aspartate + ATP = 2-(N(omega)-L-arginino)succinate + AMP + diphosphate + H(+). The protein operates within amino-acid biosynthesis; L-arginine biosynthesis; L-arginine from L-ornithine and carbamoyl phosphate: step 2/3. The chain is Argininosuccinate synthase from Synechococcus elongatus (strain ATCC 33912 / PCC 7942 / FACHB-805) (Anacystis nidulans R2).